The following is a 444-amino-acid chain: Phosphoglucosamine mutase (444 aa).

Residue S101 is the Phosphoserine intermediate of the active site. Residues S101, D240, D242, and D244 each coordinate Mg(2+). A Phosphoserine modification is found at S101.

It belongs to the phosphohexose mutase family. The cofactor is Mg(2+). Activated by phosphorylation.

It carries out the reaction alpha-D-glucosamine 1-phosphate = D-glucosamine 6-phosphate. Its function is as follows. Catalyzes the conversion of glucosamine-6-phosphate to glucosamine-1-phosphate. This Photobacterium profundum (strain SS9) protein is Phosphoglucosamine mutase.